Reading from the N-terminus, the 156-residue chain is MNINATILGQAIAFILFVAFCMKYVWPPLMAAIEKRQKEVADGLASAERAKKDLDLAQASATDQLKKAKDDAQVIIEQANKRRAQILDDAKAEAEQERNKIVTQAQAEIDAERKRAREELRKQVAMLAVAGAEKIIERSVDEAANSDIVDKLVAEL.

A helical transmembrane segment spans residues 11 to 31 (AIAFILFVAFCMKYVWPPLMA).

Belongs to the ATPase B chain family. In terms of assembly, F-type ATPases have 2 components, F(1) - the catalytic core - and F(0) - the membrane proton channel. F(1) has five subunits: alpha(3), beta(3), gamma(1), delta(1), epsilon(1). F(0) has three main subunits: a(1), b(2) and c(10-14). The alpha and beta chains form an alternating ring which encloses part of the gamma chain. F(1) is attached to F(0) by a central stalk formed by the gamma and epsilon chains, while a peripheral stalk is formed by the delta and b chains.

The protein resides in the cell inner membrane. Its function is as follows. F(1)F(0) ATP synthase produces ATP from ADP in the presence of a proton or sodium gradient. F-type ATPases consist of two structural domains, F(1) containing the extramembraneous catalytic core and F(0) containing the membrane proton channel, linked together by a central stalk and a peripheral stalk. During catalysis, ATP synthesis in the catalytic domain of F(1) is coupled via a rotary mechanism of the central stalk subunits to proton translocation. Component of the F(0) channel, it forms part of the peripheral stalk, linking F(1) to F(0). This is ATP synthase subunit b from Erwinia tasmaniensis (strain DSM 17950 / CFBP 7177 / CIP 109463 / NCPPB 4357 / Et1/99).